Consider the following 139-residue polypeptide: Small ribosomal subunit protein uS12m (139 aa).

Residues 1–29 (MSWPGLLYGLTTSLSRGLALAPQLWAARS) constitute a mitochondrion transit peptide.

This sequence belongs to the universal ribosomal protein uS12 family. In terms of assembly, component of the mitochondrial ribosome small subunit (28S) which comprises a 12S rRNA and about 30 distinct proteins.

The protein resides in the mitochondrion. The polypeptide is Small ribosomal subunit protein uS12m (Mrps12) (Mus musculus (Mouse)).